Here is a 451-residue protein sequence, read N- to C-terminus: Cytochrome c biogenesis protein CcsB (451 aa).

Transmembrane regions (helical) follow at residues 30–50, 89–109, and 175–195; these read LRLA…GTVI, TWWF…CTFT, and IGPI…IWGA.

It belongs to the Ccs1/CcsB family. May interact with CcsA.

It localises to the cellular thylakoid membrane. Its function is as follows. Required during biogenesis of c-type cytochromes (cytochrome c6 and cytochrome f) at the step of heme attachment. This Crocosphaera subtropica (strain ATCC 51142 / BH68) (Cyanothece sp. (strain ATCC 51142)) protein is Cytochrome c biogenesis protein CcsB.